We begin with the raw amino-acid sequence, 287 residues long: Ethanolamine ammonia-lyase small subunit (287 aa).

Residues Val-168, Glu-189, and Cys-218 each coordinate adenosylcob(III)alamin.

This sequence belongs to the EutC family. As to quaternary structure, the basic unit is a heterodimer which dimerizes to form tetramers. The heterotetramers trimerize; 6 large subunits form a core ring with 6 small subunits projecting outwards. Adenosylcob(III)alamin serves as cofactor.

It is found in the bacterial microcompartment. It carries out the reaction ethanolamine = acetaldehyde + NH4(+). It functions in the pathway amine and polyamine degradation; ethanolamine degradation. Functionally, catalyzes the deamination of various vicinal amino-alcohols to oxo compounds. Allows this organism to utilize ethanolamine as the sole source of nitrogen and carbon in the presence of external vitamin B12. The sequence is that of Ethanolamine ammonia-lyase small subunit from Pseudomonas syringae pv. tomato (strain ATCC BAA-871 / DC3000).